The chain runs to 186 residues: MTDIARIIEVVEPEAKALGFDLVRVRYFKGGEIGDEEHTLQIMAERPDTGQLVIEDCAALSRRVSDRFDELEEAGDVLIEDAYRLEVSSPGIDRPLTRAKDFAAWIGHEARVELSELLDNRKRFRGELKGFDAETQAISIEDDGVVFEVPFDLVSNAKLILTDKLIAASRPLDTSGADEILEEQED.

The protein belongs to the RimP family.

It localises to the cytoplasm. Its function is as follows. Required for maturation of 30S ribosomal subunits. The polypeptide is Ribosome maturation factor RimP (Novosphingobium aromaticivorans (strain ATCC 700278 / DSM 12444 / CCUG 56034 / CIP 105152 / NBRC 16084 / F199)).